The following is a 413-amino-acid chain: Na(+)-translocating NADH-quinone reductase subunit B (413 aa).

Helical transmembrane passes span 55-75 (IMIMVWFAVFPAMFWGMYNAG), 128-148 (FLPIYATVFIVGGFWEVLFCM), and 163-183 (ILFALIVPPTLPLWQAALGIT). T235 bears the FMN phosphoryl threonine mark. Helical transmembrane passes span 267 to 287 (IPGSIGEVSTLALMIGAAMIV), 296 to 316 (IIAGVMIGMIAVSTLFNVIGS), 324 to 344 (MPWHWHLVLGGFAFGMFFMAT), 357 to 377 (WWYGILIGAMCVMIRVVNPAY), and 380 to 400 (GMMLAILFANLFAPLFDHVVI).

The protein belongs to the NqrB/RnfD family. In terms of assembly, composed of six subunits; NqrA, NqrB, NqrC, NqrD, NqrE and NqrF. It depends on FMN as a cofactor.

Its subcellular location is the cell inner membrane. It carries out the reaction a ubiquinone + n Na(+)(in) + NADH + H(+) = a ubiquinol + n Na(+)(out) + NAD(+). Its function is as follows. NQR complex catalyzes the reduction of ubiquinone-1 to ubiquinol by two successive reactions, coupled with the transport of Na(+) ions from the cytoplasm to the periplasm. NqrA to NqrE are probably involved in the second step, the conversion of ubisemiquinone to ubiquinol. The protein is Na(+)-translocating NADH-quinone reductase subunit B of Vibrio campbellii (strain ATCC BAA-1116).